The chain runs to 647 residues: Sodium/nucleoside cotransporter 1 (647 aa).

The Cytoplasmic segment spans residues 1–79 (MEDNTPRQRD…VRRFCREHTQ (79 aa)). A disordered region spans residues 34-58 (EGRAPGSDSSPAEVGGGWSKAGPEH). The chain crosses the membrane as a helical span at residues 80–103 (LFRWICTGLLCTAFAAFLLIACLL). Residues 104-108 (DFQRA) are Extracellular-facing. A helical transmembrane segment spans residues 109–127 (LALFVLFCVVLFFLAHSLL). The Cytoplasmic portion of the chain corresponds to 128-146 (KRLLGPKLLRCVKPLRHPC). The chain crosses the membrane as a helical span at residues 147–166 (LNLWFKRGLALAAFLGLVLW). Topologically, residues 167 to 177 (LVLDTAQRPEQ) are extracellular. The helical transmembrane segment at 178–194 (LVSFGGICVFILLLFAG) threads the bilayer. Over 195 to 200 (SKHHRA) the chain is Cytoplasmic. A helical transmembrane segment spans residues 201–221 (VSWRAVSWGLGLQFALGLFVI). Over 222–260 (RTEPGFIAFQWLGDQIQIFLSYTEAGSSFVFGEALVKDV) the chain is Extracellular. Residues 261 to 282 (FAFQVLPIIVFFSCAMSVLYYV) traverse the membrane as a helical segment. Over 283 to 293 (GLMQWVILKIS) the chain is Cytoplasmic. A helical transmembrane segment spans residues 294 to 317 (WLMQATMGTTATETLSVAGNIFVS). The Extracellular portion of the chain corresponds to 318–336 (QTEAPLLIRPYLADMTLSE). A helical transmembrane segment spans residues 337–359 (IHVVMTGGYATIAGSLLGAYISF). Residues 360–365 (GIDAAS) are Cytoplasmic-facing. The helical transmembrane segment at 366–385 (LIAASVMAAPCALALSKLVY) threads the bilayer. Residues 386–422 (PEVEESKFKREEGVKLTYGDAQNLLEAASSGAAMSVR) are Extracellular-facing. A helical membrane pass occupies residues 423–445 (VVTNIAANLIAFLAVLAFINAAL). Residues 446 to 456 (SWLGDMVDVQG) lie on the Cytoplasmic side of the membrane. Residues 457 to 478 (LSFQLICSYVLRPVAFLMGVAW) form a helical membrane-spanning segment. Residues 479-533 (EDCPVVAELLGMKLFLNEFVAYQELSGYKQRRLAGAEEWVGSRKQWISVRAEILT) are Extracellular-facing. The chain crosses the membrane as a helical span at residues 534-557 (TYALCGFANFSSIGIMLGGLTSMV). Residues 558–568 (PQRKGDFSQIV) are Cytoplasmic-facing. A helical transmembrane segment spans residues 569-591 (LRALCTGACVSLVNACVAGILYV). Topologically, residues 592-647 (PRGAEVDCVSFLNTTLSSSSFEVYQCCRQFFQSTSLEFSPEALDNCCRFYNHTICV) are extracellular. 2 N-linked (GlcNAc...) asparagine glycosylation sites follow: asparagine 604 and asparagine 642.

Belongs to the concentrative nucleoside transporter (CNT) (TC 2.A.41) family. Post-translationally, N-glycosylated. N-glycosylation is required for localization to the plasma membrane and the transporter activity.

Its subcellular location is the cell membrane. The protein resides in the apical cell membrane. The catalysed reaction is uridine(out) + Na(+)(out) = uridine(in) + Na(+)(in). The enzyme catalyses thymidine(out) + Na(+)(out) = thymidine(in) + Na(+)(in). It carries out the reaction cytidine(out) + Na(+)(out) = cytidine(in) + Na(+)(in). It catalyses the reaction adenosine(out) + Na(+)(out) = adenosine(in) + Na(+)(in). With respect to regulation, due to its high apparent affinity but slow transport, adenosine could act as a negative regulator of pyrimidine transport under some conditions. Functionally, sodium and pyrimidine nucleoside symporter of the plasma membrane that imports uridine, thymidine and cytidine into cells by coupling their transport to the transmembrane sodium electrochemical gradient. Also transports adenosine, an atypical substrate transported with high apparent affinity, but low maximum velocity. Therefore, exhibits the transport characteristics of the nucleoside transport system cit or N2 subtype (N2/cit). Involved in renal nucleoside (re)absorption. The protein is Sodium/nucleoside cotransporter 1 (SLC28A1) of Sus scrofa (Pig).